A 529-amino-acid chain; its full sequence is Pre-rRNA-processing protein pro-1 (529 aa).

WD repeat units lie at residues 136–175 (AHYQ…SADR) and 287–326 (GHSD…CLKV). A coiled-coil region spans residues 416–518 (ARNEAAKAEK…LKEINKQMYE (103 aa)). Residues 436 to 470 (TLGDDEDDAPEVGNQRRKSGKKNKKNRKNQKKNDF) are disordered. Residues 450–465 (QRRKSGKKNKKNRKNQ) show a composition bias toward basic residues.

This sequence belongs to the WD repeat IPI3/WDR18 family. As to quaternary structure, component of the PELP1 complex, composed of at least PELP1, TEX10 and WDR18. The complex interacts with pre-60S ribosome particles.

Its subcellular location is the nucleus. The protein resides in the nucleolus. It localises to the nucleoplasm. In terms of biological role, component of the PELP1 complex involved in the nucleolar steps of 28S rRNA maturation and the subsequent nucleoplasmic transit of the pre-60S ribosomal subunit. Required for processing ITS2 sequences from rRNA intermediates during 26S rRNA maturation. Required in the soma to promote normal proliferation and prevent germline tumor formation. In Caenorhabditis elegans, this protein is Pre-rRNA-processing protein pro-1.